The sequence spans 90 residues: WAP four-disulfide core domain protein 12 (90 aa).

The N-terminal stretch at 1-23 is a signal peptide; that stretch reads MGSSSFLVLMVSLALVTLVAVEG. Residues 27–74 enclose the WAP domain; the sequence is GIEKAGVCPADNVRCFKSDPPQCHTDQDCLGERKCCYLHCGFKCVIPV. 4 cysteine pairs are disulfide-bonded: Cys-34/Cys-62, Cys-41/Cys-66, Cys-49/Cys-61, and Cys-55/Cys-70.

It localises to the secreted. Antibacterial protein. Putative acid-stable proteinase inhibitor. The protein is WAP four-disulfide core domain protein 12 (WFDC12) of Pongo abelii (Sumatran orangutan).